Reading from the N-terminus, the 365-residue chain is Serpentine receptor class epsilon-38 (365 aa).

A run of 7 helical transmembrane segments spans residues 26 to 46, 65 to 85, 124 to 144, 168 to 188, 196 to 216, 256 to 276, and 285 to 305; these read GMYLYLLLTEILLYVGTGVII, IMTALFLCQWFEAIAAKLLII, ALVISGFLIWHYAYTMIFGIL, IPVFLITSTHLITLTFSYFVL, LGTSPCFLNSALVVMTFLAVW, LVIVVLCAISVPCALLICLVI, and IFIHIMENFIYLNPVIICSTL.

This sequence belongs to the nematode receptor-like protein sre family.

The protein localises to the membrane. This chain is Serpentine receptor class epsilon-38 (sre-38), found in Caenorhabditis elegans.